Consider the following 561-residue polypeptide: Carboxylesterase 4A (561 aa).

The first 20 residues, 1-20, serve as a signal peptide directing secretion; the sequence is MRWILCWSLTLCLMAQTALG. Residues Cys-88 and Cys-116 are joined by a disulfide bond. An N-linked (GlcNAc...) asparagine glycan is attached at Asn-214. Residue Ser-221 is the Acyl-ester intermediate of the active site. The cysteines at positions 273 and 284 are disulfide-linked. An N-linked (GlcNAc...) asparagine glycan is attached at Asn-276. Catalysis depends on Glu-353, which acts as the Charge relay system. Asn-388 carries an N-linked (GlcNAc...) asparagine glycan. Catalysis depends on His-467, which acts as the Charge relay system.

Belongs to the type-B carboxylesterase/lipase family.

It is found in the secreted. Functionally, probable carboxylesterase. This chain is Carboxylesterase 4A (CES4A), found in Homo sapiens (Human).